The following is a 234-amino-acid chain: Leucyl/phenylalanyl-tRNA--protein transferase (234 aa).

It belongs to the L/F-transferase family.

The protein localises to the cytoplasm. It carries out the reaction N-terminal L-lysyl-[protein] + L-leucyl-tRNA(Leu) = N-terminal L-leucyl-L-lysyl-[protein] + tRNA(Leu) + H(+). It catalyses the reaction N-terminal L-arginyl-[protein] + L-leucyl-tRNA(Leu) = N-terminal L-leucyl-L-arginyl-[protein] + tRNA(Leu) + H(+). The enzyme catalyses L-phenylalanyl-tRNA(Phe) + an N-terminal L-alpha-aminoacyl-[protein] = an N-terminal L-phenylalanyl-L-alpha-aminoacyl-[protein] + tRNA(Phe). In terms of biological role, functions in the N-end rule pathway of protein degradation where it conjugates Leu, Phe and, less efficiently, Met from aminoacyl-tRNAs to the N-termini of proteins containing an N-terminal arginine or lysine. The polypeptide is Leucyl/phenylalanyl-tRNA--protein transferase (Escherichia coli O7:K1 (strain IAI39 / ExPEC)).